A 344-amino-acid chain; its full sequence is Ferrochelatase (344 aa).

Fe cation contacts are provided by H214 and E295.

Belongs to the ferrochelatase family.

It localises to the cytoplasm. The enzyme catalyses heme b + 2 H(+) = protoporphyrin IX + Fe(2+). It functions in the pathway porphyrin-containing compound metabolism; protoheme biosynthesis; protoheme from protoporphyrin-IX: step 1/1. In terms of biological role, catalyzes the ferrous insertion into protoporphyrin IX. The protein is Ferrochelatase of Rhizobium leguminosarum bv. trifolii (strain WSM2304).